Reading from the N-terminus, the 334-residue chain is MKTERILGALYGQALGDAMGMPSELWPRSRVKAHFGWIDRFLPGPKENNAACYFNRAEFTDDTSMALCLADALLEREGKIDPDLIGRNILDWALRFDAFNKNVLGPTSKIALNAIRDGKPVAELENNGVTNGAAMRVSPLGCLLPARDVDSFIDDVALASSPTHKSDLAVAGAVVIAWAISRAIDGESWSAIVDSLPSIARHAQQKRITTFSASLAARLEIALKIVRNADGTESASEQLYQVVGAGTSTIESVPCAIALVELAQTDPNRCAVLCANLGGDTDTIGAMATAICGALHGVNAIDPALKAELDAVNQLDFNRYATALAKYRQQREAV.

Belongs to the ADP-ribosylglycohydrolase family.

This is an uncharacterized protein from Escherichia coli (strain K12).